The sequence spans 237 residues: Ribosomal RNA small subunit methyltransferase G (237 aa).

S-adenosyl-L-methionine-binding positions include Gly78, Phe83, 129–130, and Arg148; that span reads AE.

The protein belongs to the methyltransferase superfamily. RNA methyltransferase RsmG family.

The protein localises to the cytoplasm. Functionally, specifically methylates the N7 position of a guanine in 16S rRNA. The protein is Ribosomal RNA small subunit methyltransferase G of Streptococcus pyogenes serotype M12 (strain MGAS2096).